The sequence spans 212 residues: Protein-L-isoaspartate O-methyltransferase (212 aa).

S60 is a catalytic residue.

It belongs to the methyltransferase superfamily. L-isoaspartyl/D-aspartyl protein methyltransferase family.

The protein localises to the cytoplasm. The catalysed reaction is [protein]-L-isoaspartate + S-adenosyl-L-methionine = [protein]-L-isoaspartate alpha-methyl ester + S-adenosyl-L-homocysteine. Functionally, catalyzes the methyl esterification of L-isoaspartyl residues in peptides and proteins that result from spontaneous decomposition of normal L-aspartyl and L-asparaginyl residues. It plays a role in the repair and/or degradation of damaged proteins. The polypeptide is Protein-L-isoaspartate O-methyltransferase (Methanococcus maripaludis (strain C7 / ATCC BAA-1331)).